The sequence spans 122 residues: MARIAGVNIPTAKRVVIALTYIHGIGPKFAQEIMDKVGIPAEKRVHQLTDAEVLQIREAIDRDYQVEGDLRRETSMNIKRLMDLGCYRGLRHRRGLPVRGQRTHTNARTRKGPAKAIAGKKK.

The interval 99-122 is disordered; sequence RGQRTHTNARTRKGPAKAIAGKKK.

This sequence belongs to the universal ribosomal protein uS13 family. In terms of assembly, part of the 30S ribosomal subunit. Forms a loose heterodimer with protein S19. Forms two bridges to the 50S subunit in the 70S ribosome.

Its function is as follows. Located at the top of the head of the 30S subunit, it contacts several helices of the 16S rRNA. In the 70S ribosome it contacts the 23S rRNA (bridge B1a) and protein L5 of the 50S subunit (bridge B1b), connecting the 2 subunits; these bridges are implicated in subunit movement. Contacts the tRNAs in the A and P-sites. The polypeptide is Small ribosomal subunit protein uS13 (Agrobacterium fabrum (strain C58 / ATCC 33970) (Agrobacterium tumefaciens (strain C58))).